A 337-amino-acid chain; its full sequence is GTP 3',8-cyclase (337 aa).

The region spanning 17–242 (AFQRRYYYLR…QSKGLLDGPA (226 aa)) is the Radical SAM core domain. A GTP-binding site is contributed by Arg26. The [4Fe-4S] cluster site is built by Cys33 and Cys37. Tyr39 is an S-adenosyl-L-methionine binding site. Residue Cys40 coordinates [4Fe-4S] cluster. Arg76 is a binding site for GTP. Gly80 contacts S-adenosyl-L-methionine. Thr107 provides a ligand contact to GTP. Residue Ser131 coordinates S-adenosyl-L-methionine. Lys168 contacts GTP. Met202 contacts S-adenosyl-L-methionine. [4Fe-4S] cluster-binding residues include Cys265 and Cys268. 270–272 (RLR) serves as a coordination point for GTP. [4Fe-4S] cluster is bound at residue Cys282.

The protein belongs to the radical SAM superfamily. MoaA family. In terms of assembly, monomer and homodimer. [4Fe-4S] cluster serves as cofactor.

It carries out the reaction GTP + AH2 + S-adenosyl-L-methionine = (8S)-3',8-cyclo-7,8-dihydroguanosine 5'-triphosphate + 5'-deoxyadenosine + L-methionine + A + H(+). Its pathway is cofactor biosynthesis; molybdopterin biosynthesis. In terms of biological role, catalyzes the cyclization of GTP to (8S)-3',8-cyclo-7,8-dihydroguanosine 5'-triphosphate. The chain is GTP 3',8-cyclase from Pasteurella multocida (strain Pm70).